Here is a 298-residue protein sequence, read N- to C-terminus: Bifunctional protein FolD (298 aa).

NADP(+) is bound by residues 165–167 (GRS), S190, and I231.

The protein belongs to the tetrahydrofolate dehydrogenase/cyclohydrolase family. Homodimer.

It carries out the reaction (6R)-5,10-methylene-5,6,7,8-tetrahydrofolate + NADP(+) = (6R)-5,10-methenyltetrahydrofolate + NADPH. It catalyses the reaction (6R)-5,10-methenyltetrahydrofolate + H2O = (6R)-10-formyltetrahydrofolate + H(+). It functions in the pathway one-carbon metabolism; tetrahydrofolate interconversion. In terms of biological role, catalyzes the oxidation of 5,10-methylenetetrahydrofolate to 5,10-methenyltetrahydrofolate and then the hydrolysis of 5,10-methenyltetrahydrofolate to 10-formyltetrahydrofolate. This Prochlorococcus marinus subsp. pastoris (strain CCMP1986 / NIES-2087 / MED4) protein is Bifunctional protein FolD.